Consider the following 82-residue polypeptide: Small ribosomal subunit protein bS18 (82 aa).

The protein belongs to the bacterial ribosomal protein bS18 family. As to quaternary structure, part of the 30S ribosomal subunit. Forms a tight heterodimer with protein bS6.

Functionally, binds as a heterodimer with protein bS6 to the central domain of the 16S rRNA, where it helps stabilize the platform of the 30S subunit. The sequence is that of Small ribosomal subunit protein bS18 from Chlamydia pneumoniae (Chlamydophila pneumoniae).